Reading from the N-terminus, the 614-residue chain is BTB/POZ domain-containing protein At5g48800 (614 aa).

The BTB domain occupies S43–S111. The region spanning D219 to K484 is the NPH3 domain. Y425 is modified (phosphotyrosine). 2 disordered regions span residues S492–Y525 and G583–D614. Residues S507–P521 are compositionally biased toward polar residues. Residues K522–R562 are a coiled coil. Residues G583–S597 are compositionally biased toward low complexity.

It belongs to the NPH3 family.

The protein operates within protein modification; protein ubiquitination. In terms of biological role, may act as a substrate-specific adapter of an E3 ubiquitin-protein ligase complex (CUL3-RBX1-BTB) which mediates the ubiquitination and subsequent proteasomal degradation of target proteins. This is BTB/POZ domain-containing protein At5g48800 from Arabidopsis thaliana (Mouse-ear cress).